The primary structure comprises 653 residues: Aspartate--tRNA ligase, mitochondrial (653 aa).

The transit peptide at 1–46 (MYLGFWLSRLCRGLSRPIGKTMRPIWGSLSRNLALSSQRIPEFSSF) directs the protein to the mitochondrion. The residue at position 218 (T218) is a Phosphothreonine. S241 carries the phosphoserine modification. The segment at 243–246 (QQFK) is aspartate. R265 contributes to the L-aspartate binding site. ATP is bound by residues 265–267 (RDE) and E534. R541 contacts L-aspartate. 583 to 586 (GLDR) provides a ligand contact to ATP.

This sequence belongs to the class-II aminoacyl-tRNA synthetase family. Type 1 subfamily. As to quaternary structure, homodimer.

It is found in the mitochondrion matrix. Its subcellular location is the mitochondrion membrane. It carries out the reaction tRNA(Asp) + L-aspartate + ATP = L-aspartyl-tRNA(Asp) + AMP + diphosphate. Catalyzes the attachment of aspartate to tRNA(Asp) in a two-step reaction: aspartate is first activated by ATP to form Asp-AMP and then transferred to the acceptor end of tRNA(Asp). This is Aspartate--tRNA ligase, mitochondrial (Dars2) from Mus musculus (Mouse).